The sequence spans 185 residues: Probable chorismate pyruvate-lyase 2 (185 aa).

Substrate is bound by residues Arg80, Leu118, and Glu170.

Belongs to the UbiC family.

It is found in the cytoplasm. It catalyses the reaction chorismate = 4-hydroxybenzoate + pyruvate. The protein operates within cofactor biosynthesis; ubiquinone biosynthesis. Its function is as follows. Removes the pyruvyl group from chorismate, with concomitant aromatization of the ring, to provide 4-hydroxybenzoate (4HB) for the ubiquinone pathway. The sequence is that of Probable chorismate pyruvate-lyase 2 from Pseudomonas entomophila (strain L48).